The primary structure comprises 73 residues: MVEIQTGLRENTVGAVEQFAEIASIDPLVASMILSGAIIITVAVVAFGALTLGAIGASIKRGLSGSEEPNQPA.

The helical transmembrane segment at 37–57 (AIIITVAVVAFGALTLGAIGA) threads the bilayer.

Its subcellular location is the membrane. This is an uncharacterized protein from Natronomonas pharaonis (strain ATCC 35678 / DSM 2160 / CIP 103997 / JCM 8858 / NBRC 14720 / NCIMB 2260 / Gabara) (Halobacterium pharaonis).